Consider the following 130-residue polypeptide: Small ribosomal subunit protein uS9 (130 aa).

Belongs to the universal ribosomal protein uS9 family.

This Caldicellulosiruptor saccharolyticus (strain ATCC 43494 / DSM 8903 / Tp8T 6331) protein is Small ribosomal subunit protein uS9.